An 848-amino-acid chain; its full sequence is Beta-galactosidase 11 (848 aa).

The N-terminal stretch at 1–23 (MSAAAVLAVVAAAVAALAAAASG) is a signal peptide. A glycan (N-linked (GlcNAc...) asparagine) is linked at Asn-29. Glu-189 functions as the Proton donor in the catalytic mechanism. The active-site Nucleophile is Glu-260. N-linked (GlcNAc...) asparagine glycans are attached at residues Asn-261, Asn-472, and Asn-783. The SUEL-type lectin domain maps to 750 to 837 (GGLKPTAVLS…GTLAVQAKCS (88 aa)).

The protein belongs to the glycosyl hydrolase 35 family.

The protein resides in the secreted. It is found in the extracellular space. It localises to the apoplast. It catalyses the reaction Hydrolysis of terminal non-reducing beta-D-galactose residues in beta-D-galactosides.. This is Beta-galactosidase 11 from Oryza sativa subsp. japonica (Rice).